The chain runs to 222 residues: Probable mitochondrial import inner membrane translocase subunit Tim17 3 (222 aa).

The next 3 helical transmembrane spans lie at 16–36, 60–80, and 115–135; these read CGCAFMMGTIGGSLFEFLKGF, SIAGSFAVWGATFSTVDCALV, and ALVGCLVLAMIEGAGAAVATI.

Belongs to the Tim17/Tim22/Tim23 family. Component of the TIM23 complex at least composed of Tim23, Tim17 (Tim17a1, Tim17a2 or Tim17b1) and a Tim50. The complex interacts with the Tim44 component of the PAM complex.

It localises to the mitochondrion inner membrane. In terms of biological role, essential component of the TIM23 complex, a complex that mediates the translocation of transit peptide-containing proteins across the mitochondrial inner membrane. This is Probable mitochondrial import inner membrane translocase subunit Tim17 3 (Tim17a1) from Drosophila melanogaster (Fruit fly).